The following is a 433-amino-acid chain: Serine carboxypeptidase-like 8 (433 aa).

Positions 1–19 (MSLKIKFLLLLVLYHHVDS) are cleaved as a signal peptide. Intrachain disulfides connect C78–C323, C241–C255, and C279–C289. N99 carries an N-linked (GlcNAc...) asparagine glycan. S173 is a catalytic residue. N-linked (GlcNAc...) asparagine glycosylation is found at N283, N324, and N342. Catalysis depends on residues D358 and H411. N-linked (GlcNAc...) asparagine glycosylation occurs at N418.

Belongs to the peptidase S10 family. Post-translationally, N-glycosylated. In terms of tissue distribution, highly expressed in seedlings. Expressed in leaves, stems, flowers and siliques, and at low levels in roots.

It localises to the vacuole. The catalysed reaction is 1-O-(trans-sinapoyl)-beta-D-glucose + (S)-malate = sinapoyl (S)-malate + D-glucose. It catalyses the reaction 2 1-O-(trans-sinapoyl)-beta-D-glucose = 1,2-di-O-sinapoyl beta-D-glucose + D-glucose. Its activity is regulated as follows. 95% inhibition by diisopropyl fluorophosphate (DFP) and 30% by phenylmethylsulfonyl fluoride (PMSF). Functionally, involved in plants secondary metabolism. Functions as acyltransferase to form the sinapate ester sinapoylmalate. Also capable of catalyzing the formation of 1,2-bis-O-sinapoyl beta-D-glucoside. The polypeptide is Serine carboxypeptidase-like 8 (Arabidopsis thaliana (Mouse-ear cress)).